Here is a 150-residue protein sequence, read N- to C-terminus: Large ribosomal subunit protein bL9 (150 aa).

Belongs to the bacterial ribosomal protein bL9 family.

Its function is as follows. Binds to the 23S rRNA. The sequence is that of Large ribosomal subunit protein bL9 from Paraburkholderia phytofirmans (strain DSM 17436 / LMG 22146 / PsJN) (Burkholderia phytofirmans).